A 104-amino-acid polypeptide reads, in one-letter code: MIRKAFVMQVNPDAHEEYQRRHNPIWPELEAVLKSHGAHNYAIYLDKAHNLLFATVEIESEERWNAVASTDVCQRWWKYMTDVMPANADNSPVSSELQEVFYLP.

Residue Tyr18 coordinates substrate. His22 (proton donor) is an active-site residue. Substrate contacts are provided by residues Tyr41 and 76–77; that span reads WW.

This sequence belongs to the rhamnose mutarotase family. As to quaternary structure, homodimer.

Its subcellular location is the cytoplasm. It catalyses the reaction alpha-L-rhamnose = beta-L-rhamnose. It functions in the pathway carbohydrate metabolism; L-rhamnose metabolism. Functionally, involved in the anomeric conversion of L-rhamnose. This chain is L-rhamnose mutarotase, found in Escherichia coli O1:K1 / APEC.